The primary structure comprises 504 residues: ATP synthase subunit alpha (504 aa).

170 to 177 (GDRQTGKT) lines the ATP pocket.

This sequence belongs to the ATPase alpha/beta chains family. In terms of assembly, F-type ATPases have 2 components, CF(1) - the catalytic core - and CF(0) - the membrane proton channel. CF(1) has five subunits: alpha(3), beta(3), gamma(1), delta(1), epsilon(1). CF(0) has four main subunits: a, b, b' and c.

It localises to the cellular thylakoid membrane. The enzyme catalyses ATP + H2O + 4 H(+)(in) = ADP + phosphate + 5 H(+)(out). Produces ATP from ADP in the presence of a proton gradient across the membrane. The alpha chain is a regulatory subunit. In Prochlorococcus marinus (strain MIT 9211), this protein is ATP synthase subunit alpha.